A 339-amino-acid polypeptide reads, in one-letter code: MTSWRDKSAKVQVKESELPSSIPAQTGLTFNIWYNKWSQGFAGNTRFVSPFALQPQLHSGKTRGDNDGQLFFCLFFAKGMCCLGPKCEYLHHIPDEEDIGKLALRTEVLDCFGREKFADYREDMGGIGSFRKKNKTLYVGGIDGALNSKHLKPAQIESRIRFVFSRLGDIDRIRYVESKNCGFVKFKYQANAEFAKEAMSNQTLLLPSDKEWDDRREGTGLLVKWANEDPDPAAQKRLQEELKLESLNMMVHLINNNTNSAGTEVNNKNNERLDRTFPEASVDNVKKRLLPLDNGMESDDFIEKLKKVKKNISRENISSKPSVGKLGGPLLDYLSSDED.

A C3H1-type zinc finger spans residues 67 to 94 (DGQLFFCLFFAKGMCCLGPKCEYLHHIP). The RRM domain occupies 135–228 (KTLYVGGIDG…TGLLVKWANE (94 aa)). Residues 313–339 (SRENISSKPSVGKLGGPLLDYLSSDED) form a disordered region. S335 and S336 each carry phosphoserine.

The protein belongs to the RRM CWC2 family. As to quaternary structure, belongs to the CWC complex (or CEF1-associated complex), a spliceosome subcomplex composed of the U2, U5 and U6 snRNAs and at least BUD13, BUD31, BRR2, CDC40, CEF1, CLF1, CUS1, CWC2, CWC15, CWC21, CWC22, CWC23, CWC24, CWC25, CWC27, ECM2, HSH155, IST3, ISY1, LEA1, MSL1, NTC20, PRP8, PRP9, PRP11, PRP19, PRP21, PRP22, PRP45, PRP46, SLU7, SMB1, SMD1, SMD2, SMD3, SMX2, SMX3, SNT309, SNU114, SPP2, SYF1, SYF2, RSE1 and YJU2. Interacts with ISY1. Interacts with PRP19.

It localises to the nucleus. Its function is as follows. Involved in the first step of pre-mRNA splicing. Required for cell growth and cell cycle control. Plays a role in the levels of the U1, U4, U5 and U6 snRNAs and the maintenance of the U4/U6 snRNA complex. May provide the link between the 'nineteen complex' NTC spliceosome protein complex and the spliceosome through the U6 snRNA. Associates predominantly with U6 snRNAs in assembled active spliceosomes. Binds directly to the internal stem-loop (ISL) domain of the U6 snRNA and to the pre-mRNA intron near the 5' splice site during the activation and catalytic phases of the spliceosome cycle. Binds also to U1, U4, U5 and U6 snRNAs and to pre-mRNAs, in vitro. Is not required for the Prp2-mediated remodeling of the activated spliceosome. This Saccharomyces cerevisiae (strain ATCC 204508 / S288c) (Baker's yeast) protein is Pre-mRNA-splicing factor CWC2 (CWC2).